The primary structure comprises 67 residues: Large ribosomal subunit protein bL35 (67 aa).

The protein belongs to the bacterial ribosomal protein bL35 family.

The polypeptide is Large ribosomal subunit protein bL35 (Brachyspira hyodysenteriae (strain ATCC 49526 / WA1)).